The chain runs to 171 residues: Ribosome maturation factor RimM (171 aa).

The PRC barrel domain maps to 96-170; sequence PDSYYHFQLE…TMTVRLPDGL (75 aa).

Belongs to the RimM family. As to quaternary structure, binds ribosomal protein uS19.

It is found in the cytoplasm. In terms of biological role, an accessory protein needed during the final step in the assembly of 30S ribosomal subunit, possibly for assembly of the head region. Essential for efficient processing of 16S rRNA. May be needed both before and after RbfA during the maturation of 16S rRNA. It has affinity for free ribosomal 30S subunits but not for 70S ribosomes. The sequence is that of Ribosome maturation factor RimM from Heliobacterium modesticaldum (strain ATCC 51547 / Ice1).